The following is a 149-amino-acid chain: Down syndrome critical region protein 9 (149 aa).

A disordered region spans residues 1-41; it reads MGRICPVNSRARRLRARPGRPSGDSLPYHQLQGGAPRLWSP.

As to expression, testis specific.

In Homo sapiens (Human), this protein is Down syndrome critical region protein 9 (DSCR9).